We begin with the raw amino-acid sequence, 80 residues long: Exodeoxyribonuclease 7 small subunit (80 aa).

It belongs to the XseB family. As to quaternary structure, heterooligomer composed of large and small subunits.

Its subcellular location is the cytoplasm. It catalyses the reaction Exonucleolytic cleavage in either 5'- to 3'- or 3'- to 5'-direction to yield nucleoside 5'-phosphates.. Its function is as follows. Bidirectionally degrades single-stranded DNA into large acid-insoluble oligonucleotides, which are then degraded further into small acid-soluble oligonucleotides. The chain is Exodeoxyribonuclease 7 small subunit from Enterobacter sp. (strain 638).